The chain runs to 942 residues: Cilia- and flagella-associated protein 69 (942 aa).

Positions 1–16 are enriched in low complexity; the sequence is MSTAEASATTADAAEA. The segment at 1-25 is disordered; that stretch reads MSTAEASATTADAAEAGGRTKTGSP.

Expressed in ciliated olfactory sensory neurons (at protein level). Expressed in testis, specifically in sperm (at protein level).

The protein resides in the cell projection. Its subcellular location is the cilium. The protein localises to the flagellum. Functionally, cilium- and flagellum-associated protein. In the olfactory epithelium, regulates the speed of activation and termination of the odor response and thus contributes to the robustness of olfactory transduction pathways. Required for sperm flagellum assembly and stability. This is Cilia- and flagella-associated protein 69 from Mus musculus (Mouse).